The primary structure comprises 336 residues: N-lysine methyltransferase KMT5A (336 aa).

Residues 1 to 112 (MGRGKKMSKP…KPSEQRETEC (112 aa)) form a disordered region. Residues 67–93 (SVAHHESKCPGKPLTETRKKAEVEKKR) show a composition bias toward basic and acidic residues. The 122-residue stretch at 200-321 (EGMKMDMITG…VGEELLYDYG (122 aa)) folds into the SET domain. S-adenosyl-L-methionine is bound by residues 210–212 (KGR), Tyr-255, and 282–283 (NH).

The protein belongs to the class V-like SAM-binding methyltransferase superfamily. Histone-lysine methyltransferase family. PR/SET subfamily.

Its subcellular location is the nucleus. The protein resides in the chromosome. The enzyme catalyses L-lysyl(20)-[histone H4] + S-adenosyl-L-methionine = N(6)-methyl-L-lysyl(20)-[histone H4] + S-adenosyl-L-homocysteine + H(+). It catalyses the reaction L-lysyl-[protein] + S-adenosyl-L-methionine = N(6)-methyl-L-lysyl-[protein] + S-adenosyl-L-homocysteine + H(+). In terms of biological role, protein-lysine N-methyltransferase that monomethylates both histones and non-histone proteins. Specifically monomethylates 'Lys-20' of histone H4 (H4K20me1). H4K20me1 is enriched during mitosis and represents a specific tag for epigenetic transcriptional repression. Mainly functions in euchromatin regions, thereby playing a central role in the silencing of euchromatic genes. Required for cell proliferation, probably by contributing to the maintenance of proper higher-order structure of DNA during mitosis. Involved in chromosome condensation and proper cytokinesis. Nucleosomes are preferred as substrate compared to free histones. Mediates monomethylation of p53/TP53 at 'Lys-382', leading to repress p53/TP53-target genes. Plays a negative role in TGF-beta response regulation and a positive role in cell migration. The protein is N-lysine methyltransferase KMT5A of Xenopus tropicalis (Western clawed frog).